The sequence spans 318 residues: Nodulation protein D 2 (318 aa).

In terms of domain architecture, HTH lysR-type spans 6 to 63 (LDLNLLVALDALTTERNLTAAARSINLSQPAMSAAIGRLRDYFRDELFTMNGRELRLT). Residues 23–42 (LTAAARSINLSQPAMSAAIG) constitute a DNA-binding region (H-T-H motif).

The protein belongs to the LysR transcriptional regulatory family.

Functionally, nodD regulates the expression of the nodABCFE genes which encode other nodulation proteins. NodD is also a negative regulator of its own expression. Binds flavonoids as inducers. This is Nodulation protein D 2 (nodD2) from Rhizobium leguminosarum bv. phaseoli.